Here is a 342-residue protein sequence, read N- to C-terminus: Phenylalanine--tRNA ligase alpha subunit (342 aa).

Position 257 (Glu257) interacts with Mg(2+).

Belongs to the class-II aminoacyl-tRNA synthetase family. Phe-tRNA synthetase alpha subunit type 1 subfamily. As to quaternary structure, tetramer of two alpha and two beta subunits. Requires Mg(2+) as cofactor.

The protein resides in the cytoplasm. It catalyses the reaction tRNA(Phe) + L-phenylalanine + ATP = L-phenylalanyl-tRNA(Phe) + AMP + diphosphate + H(+). This Legionella pneumophila subsp. pneumophila (strain Philadelphia 1 / ATCC 33152 / DSM 7513) protein is Phenylalanine--tRNA ligase alpha subunit.